Consider the following 442-residue polypeptide: Probable carboxypeptidase PADG_04062 (442 aa).

Residues 1–20 (MKLQYLVALLSVQAVPPVTA) form the signal peptide. N-linked (GlcNAc...) asparagine glycosylation is present at Asn102. Asp160 lines the Zn(2+) pocket. The Proton acceptor role is filled by Glu192. Residue Glu193 coordinates Zn(2+). Asn343 is a glycosylation site (N-linked (GlcNAc...) asparagine).

This sequence belongs to the peptidase M20A family. Zn(2+) serves as cofactor.

The protein localises to the secreted. The protein is Probable carboxypeptidase PADG_04062 of Paracoccidioides brasiliensis (strain Pb18).